The primary structure comprises 449 residues: Polyadenylation factor subunit 2 (449 aa).

7 WD repeats span residues 77–116, 119–158, 161–200, 203–242, 245–285, 288–328, and 337–376; these read KVKHVIPAITWTPEGRRLVVATYSGEFSLWNGSSFNFESI, AHDSAVTVMQYSHAGDWLISGDADGTIKIWQPNFNMVKVL, AHTECMRDISFSYSDQKFVTCSDDNVLKIWNFSNGQQERV, GHHWDVKSCDWHPKMGLIVSGSKDNLIKLWDPRTGRNVST, GLKH…RELQ, RDDM…SNST, and AHEKSVTSLAYSPVGHILASAAKDRTIRFWARSRPVDPNA. The segment at 411–432 is disordered; sequence LPPANETNLGTPQPSILGSESI. The segment covering 415 to 432 has biased composition (polar residues); sequence NETNLGTPQPSILGSESI.

The protein resides in the nucleus. Required for 3'-end cleavage and polyadenylation of pre-mRNAs. Also involved in chromosome segregation where it has a role in chromosome attachment to the mitotic spindle. This chain is Polyadenylation factor subunit 2 (PSF2), found in Eremothecium gossypii (strain ATCC 10895 / CBS 109.51 / FGSC 9923 / NRRL Y-1056) (Yeast).